The sequence spans 103 residues: Large ribosomal subunit protein bL21 (103 aa).

The protein belongs to the bacterial ribosomal protein bL21 family. In terms of assembly, part of the 50S ribosomal subunit. Contacts protein L20.

Its function is as follows. This protein binds to 23S rRNA in the presence of protein L20. This chain is Large ribosomal subunit protein bL21, found in Amoebophilus asiaticus (strain 5a2).